The sequence spans 336 residues: Tetraacyldisaccharide 4'-kinase (336 aa).

Position 60-67 (60-67 (TVGGTGKT)) interacts with ATP.

This sequence belongs to the LpxK family.

It catalyses the reaction a lipid A disaccharide + ATP = a lipid IVA + ADP + H(+). It functions in the pathway glycolipid biosynthesis; lipid IV(A) biosynthesis; lipid IV(A) from (3R)-3-hydroxytetradecanoyl-[acyl-carrier-protein] and UDP-N-acetyl-alpha-D-glucosamine: step 6/6. Transfers the gamma-phosphate of ATP to the 4'-position of a tetraacyldisaccharide 1-phosphate intermediate (termed DS-1-P) to form tetraacyldisaccharide 1,4'-bis-phosphate (lipid IVA). The protein is Tetraacyldisaccharide 4'-kinase of Pseudomonas entomophila (strain L48).